The following is a 1080-amino-acid chain: Myocardin-related transcription factor B (1080 aa).

The RPEL 1 repeat unit spans residues 40–65; it reads EVLQLRLQQRRTREQLVDQGIMPPLK. S66 is subject to Phosphoserine. 2 RPEL repeats span residues 84–109 and 128–153; these read NFLKHKIRSRPDRSELVRMHILEETF and DDLNEKIAQRPGPMELVEKNILPVDS. 4 disordered regions span residues 170–222, 234–311, 352–384, and 477–501; these read THGE…AQFT, TPLT…EPQM, PIKTDKNSSSGSNSGSSSSMPARRPGPLPSSLD, and PHVENAHSPLPISPSPSEQSSLSTD. 2 stretches are compositionally biased toward polar residues: residues 188–200 and 240–259; these read QPASQESQGSAAS and QPPTRSTAPVLPTNTVSSAK. The span at 272–287 shows a compositional bias: basic and acidic residues; sequence NPNDKHRSKKCKDPKP. The segment covering 358–370 has biased composition (low complexity); it reads NSSSGSNSGSSSS. The SAP domain occupies 383 to 417; that stretch reads LDDLKVSELKTELKLRGLPVSGTKPDLIERLKPYQ. A phosphoserine mark is found at S531, S535, and S537. Positions 539–594 form a coiled coil; it reads SSSTLSTLELDAAEKDRKLQEKEKQIEELKRKLEQEQKLVEVLKMQLEVEKRGQQR. Positions 557–585 are required for interaction with itself and with MRTFA; sequence LQEKEKQIEELKRKLEQEQKLVEVLKMQL. Disordered stretches follow at residues 588–646 and 794–846; these read EKRG…SVGQ and LQYQ…PQQF. The span at 595 to 606 shows a compositional bias: pro residues; that stretch reads PPDPQPSDPPHP. A Glycyl lysine isopeptide (Lys-Gly) (interchain with G-Cter in SUMO1) cross-link involves residue K622. The segment covering 794–821 has biased composition (polar residues); it reads LQYQRQPGPTNQQPFVSKTSNPALQSRT. S913 carries the phosphoserine modification. The segment at 969 to 988 is disordered; that stretch reads GTLPSATDTGPLQNSSEDRE. Over residues 972 to 983 the composition is skewed to polar residues; the sequence is PSATDTGPLQNS.

As to quaternary structure, interacts with MRTFA and SRF. In terms of processing, O-glycosylated. As to expression, widely expressed. High expression in heart, brain and testis. Lower expression in lung, liver and kidney.

It is found in the nucleus. Functionally, acts as a transcriptional coactivator of serum response factor (SRF). Required for skeletal myogenic differentiation. The protein is Myocardin-related transcription factor B (Mrtfb) of Mus musculus (Mouse).